Consider the following 140-residue polypeptide: Probable lipoprotein LppE (140 aa).

Residues 1–21 (MCNRLVTVTGVAMVVAAGLSA) form the signal peptide. Cys22 carries the N-palmitoyl cysteine lipid modification. Cys22 carries the S-diacylglycerol cysteine lipid modification.

Belongs to the mycobacterial 19 kDa antigen family.

The protein localises to the cell membrane. The protein is Probable lipoprotein LppE (lppE) of Mycobacterium tuberculosis (strain ATCC 25618 / H37Rv).